A 241-amino-acid polypeptide reads, in one-letter code: Ribonuclease PH (241 aa).

Residues Arg-87 and 125–127 (GTR) each bind phosphate.

This sequence belongs to the RNase PH family. Homohexameric ring arranged as a trimer of dimers.

The catalysed reaction is tRNA(n+1) + phosphate = tRNA(n) + a ribonucleoside 5'-diphosphate. In terms of biological role, phosphorolytic 3'-5' exoribonuclease that plays an important role in tRNA 3'-end maturation. Removes nucleotide residues following the 3'-CCA terminus of tRNAs; can also add nucleotides to the ends of RNA molecules by using nucleoside diphosphates as substrates, but this may not be physiologically important. Probably plays a role in initiation of 16S rRNA degradation (leading to ribosome degradation) during starvation. This is Ribonuclease PH from Dehalococcoides mccartyi (strain ATCC BAA-2100 / JCM 16839 / KCTC 5957 / BAV1).